The sequence spans 462 residues: NEDD8-activating enzyme E1 regulatory subunit (462 aa).

Belongs to the ubiquitin-activating E1 family. ULA1 subfamily. Heterodimer of UBA3 and ULA1. The complex binds NEDD8 and UBC12.

It participates in protein modification; protein neddylation. Regulatory subunit of the dimeric UBA3-ULA1 E1 enzyme. E1 activates NEDD8/RUB1 by first adenylating its C-terminal glycine residue with ATP, thereafter linking this residue to the side chain of the catalytic cysteine, yielding a NEDD8-UBA3 thioester and free AMP. E1 finally transfers NEDD8 to the catalytic cysteine of UBC12. The protein is NEDD8-activating enzyme E1 regulatory subunit (ULA1) of Saccharomyces cerevisiae (strain ATCC 204508 / S288c) (Baker's yeast).